We begin with the raw amino-acid sequence, 146 residues long: Hemoglobin subunit theta (146 aa).

Residues 2–146 (HFTAEEKSVI…VATALAHKYH (145 aa)) form the Globin domain. The heme b site is built by His-63 and His-92.

This sequence belongs to the globin family.

The protein is Hemoglobin subunit theta of Sus scrofa (Pig).